Here is a 436-residue protein sequence, read N- to C-terminus: Trigger factor (436 aa).

The PPIase FKBP-type domain maps to aspartate 161–proline 255.

Belongs to the FKBP-type PPIase family. Tig subfamily.

The protein localises to the cytoplasm. The catalysed reaction is [protein]-peptidylproline (omega=180) = [protein]-peptidylproline (omega=0). Its function is as follows. Involved in protein export. Acts as a chaperone by maintaining the newly synthesized protein in an open conformation. Functions as a peptidyl-prolyl cis-trans isomerase. This chain is Trigger factor, found in Akkermansia muciniphila (strain ATCC BAA-835 / DSM 22959 / JCM 33894 / BCRC 81048 / CCUG 64013 / CIP 107961 / Muc).